We begin with the raw amino-acid sequence, 486 residues long: High-affinity iron permease fer2 (486 aa).

Helical transmembrane passes span 76–96 (IVLL…AAFL) and 113–133 (LWEG…SLAI). A glycan (N-linked (GlcNAc...) asparagine) is linked at Asn174. A disordered region spans residues 175–209 (HSDDSASASSSSARQAAEEEAGTKTTRTEKLNPLE). A compositionally biased stretch (low complexity) spans 179-189 (SASASSSSARQ). The next 3 membrane-spanning stretches (helical) occupy residues 252–272 (ALFT…VVFI), 283–303 (SIPL…FLIF), and 308–328 (LVSV…IASG). N-linked (GlcNAc...) asparagine glycosylation is present at Asn393. The chain crosses the membrane as a helical span at residues 400–420 (SVFMYIGYWFAVAGYLWYQIW). A glycan (N-linked (GlcNAc...) asparagine) is linked at Asn438. The disordered stretch occupies residues 441-486 (IQARQRKQEKAHQRQLREADQEEHGHSSNSDKQQHPSEAGPSTLSH). The span at 446–466 (RKQEKAHQRQLREADQEEHGH) shows a compositional bias: basic and acidic residues.

The protein belongs to the oxidase-dependent Fe transporter (OFeT) (TC 9.A.10.1) family.

It is found in the cell membrane. Its function is as follows. Permease for high affinity iron uptake. This chain is High-affinity iron permease fer2, found in Mycosarcoma maydis (Corn smut fungus).